The primary structure comprises 270 residues: Thiazole synthase (270 aa).

Residue Lys112 is the Schiff-base intermediate with DXP of the active site. Residues Gly173, Ala199–Gly200, and Asn221–Ser222 each bind 1-deoxy-D-xylulose 5-phosphate.

It belongs to the ThiG family. As to quaternary structure, homotetramer. Forms heterodimers with either ThiH or ThiS.

Its subcellular location is the cytoplasm. The enzyme catalyses [ThiS sulfur-carrier protein]-C-terminal-Gly-aminoethanethioate + 2-iminoacetate + 1-deoxy-D-xylulose 5-phosphate = [ThiS sulfur-carrier protein]-C-terminal Gly-Gly + 2-[(2R,5Z)-2-carboxy-4-methylthiazol-5(2H)-ylidene]ethyl phosphate + 2 H2O + H(+). Its pathway is cofactor biosynthesis; thiamine diphosphate biosynthesis. Functionally, catalyzes the rearrangement of 1-deoxy-D-xylulose 5-phosphate (DXP) to produce the thiazole phosphate moiety of thiamine. Sulfur is provided by the thiocarboxylate moiety of the carrier protein ThiS. In vitro, sulfur can be provided by H(2)S. The polypeptide is Thiazole synthase (Pseudomonas putida (strain ATCC 700007 / DSM 6899 / JCM 31910 / BCRC 17059 / LMG 24140 / F1)).